The sequence spans 460 residues: UDP-N-acetylmuramoylalanine--D-glutamate ligase (460 aa).

Residue 120–126 (GSNGKTT) participates in ATP binding.

It belongs to the MurCDEF family.

The protein localises to the cytoplasm. It catalyses the reaction UDP-N-acetyl-alpha-D-muramoyl-L-alanine + D-glutamate + ATP = UDP-N-acetyl-alpha-D-muramoyl-L-alanyl-D-glutamate + ADP + phosphate + H(+). It functions in the pathway cell wall biogenesis; peptidoglycan biosynthesis. Functionally, cell wall formation. Catalyzes the addition of glutamate to the nucleotide precursor UDP-N-acetylmuramoyl-L-alanine (UMA). The sequence is that of UDP-N-acetylmuramoylalanine--D-glutamate ligase from Lactobacillus gasseri (strain ATCC 33323 / DSM 20243 / BCRC 14619 / CIP 102991 / JCM 1131 / KCTC 3163 / NCIMB 11718 / NCTC 13722 / AM63).